An 82-amino-acid chain; its full sequence is Endocuticle structural protein SgAbd-6 (82 aa).

Q1 is modified (pyrrolidone carboxylic acid). Residues 18 to 82 (LGQYTFGFKT…ENGFQPQYTQ (65 aa)) enclose the Chitin-binding type R&amp;R domain.

Its function is as follows. Component of the abdominal endocuticle. This is Endocuticle structural protein SgAbd-6 from Schistocerca gregaria (Desert locust).